A 397-amino-acid chain; its full sequence is Potassium channel subfamily K member 4 (397 aa).

The Cytoplasmic portion of the chain corresponds to 1 to 3 (MRS). Residues 4–24 (TTLLALLALVLLYLVSGALVF) form a helical membrane-spanning segment. At 25–88 (QALEQPHEQQ…WTNSSNHSSA (64 aa)) the chain is on the extracellular side. Residue asparagine 81 is glycosylated (N-linked (GlcNAc...) asparagine). Positions 89 to 103 (WNLGSAFFFSGTIIT) form an intramembrane region, helical. K(+) contacts are provided by threonine 104, isoleucine 105, glycine 106, and tyrosine 107. A selectivity filter 1 region spans residues 104–109 (TIGYGN). Residues 104-110 (TIGYGNI) lie within the membrane without spanning it. Residues 111–118 (ALHTDAGR) are Extracellular-facing. The chain crosses the membrane as a helical span at residues 119-151 (LFCIFYALVGIPLFGMLLAGVGDRLGSSLRRGI). The Cytoplasmic segment spans residues 152-173 (GHIEAVFLKWHVPPGLVRMLSA). The chain crosses the membrane as a helical span at residues 174-195 (VLFLLIGCLLFVLTPTFVFSYM). The Extracellular segment spans residues 196 to 200 (ESWSK). An intramembrane region (helical) is located at residues 201–214 (LEAIYFVIVTLTTV). Positions 213, 214, 215, and 216 each coordinate K(+). A selectivity filter 2 region spans residues 213–218 (TVGFGD). Residues 215–220 (GFGDYV) lie within the membrane without spanning it. Residues 221-234 (PGDGTGQNSPAYQP) lie on the Extracellular side of the membrane. A helical transmembrane segment spans residues 235–261 (LVWFWILFGLAYFASVLTTIGNWLRAV). Residues 262 to 397 (SRRTRAEMGG…GRLRDKAVPV (136 aa)) are Cytoplasmic-facing. Positions 282 to 292 (TVTARVTQRTG) are enriched in polar residues. The segment at 282–397 (TVTARVTQRT…GRLRDKAVPV (116 aa)) is disordered. Residues 369–388 (PRGRRRPNPTKKPSRPRGPG) show a composition bias toward basic residues.

Belongs to the two pore domain potassium channel (TC 1.A.1.8) family. As to quaternary structure, homodimer; disulfide-linked. Forms heterodimers with other 2-pore domain K(+) channel subunits, such as KCNK2 and KCNK10. As to expression, detected in brain, and at much lower levels in liver, skeletal muscle and testis.

It is found in the cell membrane. The protein localises to the cell projection. It localises to the axon. It catalyses the reaction K(+)(in) = K(+)(out). The catalysed reaction is Rb(+)(in) = Rb(+)(out). It carries out the reaction Cs(+)(in) = Cs(+)(out). Its activity is regulated as follows. Activated by various stimuli including intracellular basic pH, mechanical stretch and heat and polyunsaturated fatty acids such as arachidonic acid. K(+) channel that conducts voltage-dependent outward rectifying currents upon membrane depolarization. Voltage sensing is coupled to K(+) electrochemical gradient in an 'ion flux gating' mode where outward but not inward ion flow opens the gate. Converts to voltage-independent 'leak' conductance mode upon stimulation by various stimuli including mechanical membrane stretch, basic pH, heat and lipids. Homo- and heterodimerizes to form functional channels with distinct regulatory and gating properties. At trigeminal A-beta afferent nerves, the heterodimer of KCNK2/TREK-1 and KCNK4/TRAAK is mostly coexpressed at nodes of Ranvier where it conducts voltage-independent mechanosensitive and thermosensitive currents, allowing rapid action potential repolarization, high speed and high frequence saltatory conduction on myelinated nerves to ensure prompt sensory responses. Permeable to other monovalent cations such as Rb(+) and Cs(+). This is Potassium channel subfamily K member 4 from Rattus norvegicus (Rat).